Here is a 341-residue protein sequence, read N- to C-terminus: Fructose-1,6-bisphosphatase, cytosolic (341 aa).

Mg(2+) contacts are provided by Glu-71, Glu-100, Asp-121, Leu-123, and Asp-124. Substrate is bound by residues 124–127, Asn-215, Tyr-247, Tyr-267, and Lys-277; that span reads DGSS. Glu-283 contributes to the Mg(2+) binding site.

Belongs to the FBPase class 1 family. Requires Mg(2+) as cofactor.

It localises to the cytoplasm. The protein resides in the nucleus. It carries out the reaction beta-D-fructose 1,6-bisphosphate + H2O = beta-D-fructose 6-phosphate + phosphate. Its function is as follows. Catalyzes the first irreversible reaction from fructose-1,6-bisphosphate to fructose-6-phosphate and inorganic phosphate and plays an important regulatory role in sucrose biosynthesis and metabolism. Its activity is essential to regulate starch levels. Functions in fructose-mediated signaling independently of its catalytic activity in sugar metabolism. May act downstream of ABA2/GIN1, which is involved in abscisic acid (ABA) synthesis to regulate autotrophic transition and modulate early seedling establishment after seed germination. This is Fructose-1,6-bisphosphatase, cytosolic from Arabidopsis thaliana (Mouse-ear cress).